The sequence spans 445 residues: Secretin receptor (445 aa).

The first 21 residues, 1-21, serve as a signal peptide directing secretion; it reads MCPRPGPPLGLWLLLGFACAA. At 22–137 the chain is on the extracellular side; it reads HLVGAPPRLC…HERQHAYLLK (116 aa). Cystine bridges form between Cys44/Cys71, Cys62/Cys103, and Cys85/Cys119. N-linked (GlcNAc...) asparagine glycans are attached at residues Asn68, Asn96, Asn102, and Asn124. Residues 138–163 form a helical membrane-spanning segment; it reads LKVMYTVGYSSSLVMLLVALGILCAF. Residues 164–170 are Cytoplasmic-facing; sequence RRLHCTR. A helical transmembrane segment spans residues 171–191; sequence NYIHMHLFLSFILRALSNFIK. Residues 192–212 lie on the Extracellular side of the membrane; that stretch reads DAVLFSSDDAIHCDAHRVGCK. A disulfide bridge connects residues Cys211 and Cys281. The helical transmembrane segment at 213–235 threads the bilayer; it reads LVMVFFQYCIMANYAWLLVEGLY. At 236 to 250 the chain is on the cytoplasmic side; it reads LHSLLVVSFFSERKC. Residues 251 to 272 form a helical membrane-spanning segment; it reads LQGFVVLGWGSPAMFVTSWAVT. Residues 273–287 are Extracellular-facing; sequence RHFLEDSGCWDINAN. A helical membrane pass occupies residues 288–311; it reads AAIWWVIRGPVILSILINFILFIN. Residues 312 to 336 are Cytoplasmic-facing; that stretch reads ILRILTRKLRTQETRGQDMNHYKRL. A helical transmembrane segment spans residues 337 to 352; it reads ARSTLLLIPLFGVHYI. Residues 353-363 lie on the Extracellular side of the membrane; that stretch reads VFVFSPEGAME. The chain crosses the membrane as a helical span at residues 364–387; sequence IQLFFELALGSFQGLVVAVLYCFL. Topologically, residues 388-445 are cytoplasmic; the sequence is NGEVQLEVQKKWQQWHLWEPPLCPVALSSSFSNGTSSLNSTKACPSGRSRDTCKVSII.

The protein belongs to the G-protein coupled receptor 2 family. In terms of processing, phosphorylated on Ser and Thr residues at the cytoplasmic C-terminus by G protein-coupled receptor kinases (GRKs).

It is found in the cell membrane. The protein resides in the basolateral cell membrane. Its function is as follows. G protein-coupled receptor activated by secretin (SCT), which is involved in different processes such as regulation of the pH of the duodenal content, food intake and water homeostasis. Ligand binding causes a conformation change that triggers signaling via guanine nucleotide-binding proteins (G proteins) and activates cAMP-dependent pathway. Upon binding to secretin, regulates the pH of the duodenum by (1) inhibiting the secretion of gastric acid from the parietal cells of the stomach and (2) stimulating the production of bicarbonate (NaHCO(3)) from the ductal cells of the pancreas. In addition to regulating the pH of the duodenal content, plays a central role in diet induced thermogenesis: acts as a non-sympathetic brown fat (BAT) activator mediating prandial thermogenesis, which consequentially induces satiation. Mechanistically, secretin released by the gut after a meal binds to secretin receptor (SCTR) in brown adipocytes, activating brown fat thermogenesis by stimulating lipolysis, which is sensed in the brain and promotes satiation. Also able to stimulate lipolysis in white adipocytes. Also plays an important role in cellular osmoregulation by regulating renal water reabsorption. Also plays a role in the central nervous system: required for synaptic plasticity. This chain is Secretin receptor (SCTR), found in Oryctolagus cuniculus (Rabbit).